Reading from the N-terminus, the 196-residue chain is MFLLAGLGNPGEQYALSPHNLGFLVVDRLAEQFGIRVTRKDSKALIGLGEIDGHQVMLAKPQTFMNLSGESLAPLMEKHQIEISNLVVIYDELDLPWGALKIKPKGSAAGHNGMKSVIQWFKTSEIVRVRLGIHPGHPIRSGAEFVLAPIKRSQMKELDEFVGFAADAVRTITAEGVEKAMTKFNRRAPGLNNEEA.

Y14 serves as a coordination point for tRNA. The Proton acceptor role is filled by H19. Residues F64, N66, and N112 each coordinate tRNA.

This sequence belongs to the PTH family. As to quaternary structure, monomer.

Its subcellular location is the cytoplasm. It catalyses the reaction an N-acyl-L-alpha-aminoacyl-tRNA + H2O = an N-acyl-L-amino acid + a tRNA + H(+). Its function is as follows. Hydrolyzes ribosome-free peptidyl-tRNAs (with 1 or more amino acids incorporated), which drop off the ribosome during protein synthesis, or as a result of ribosome stalling. In terms of biological role, catalyzes the release of premature peptidyl moieties from peptidyl-tRNA molecules trapped in stalled 50S ribosomal subunits, and thus maintains levels of free tRNAs and 50S ribosomes. The sequence is that of Peptidyl-tRNA hydrolase from Solibacter usitatus (strain Ellin6076).